We begin with the raw amino-acid sequence, 130 residues long: Small ribosomal subunit protein uS9 (130 aa).

It belongs to the universal ribosomal protein uS9 family.

The sequence is that of Small ribosomal subunit protein uS9 from Burkholderia ambifaria (strain MC40-6).